A 238-amino-acid chain; its full sequence is Polynucleotide 3'-phosphatase (238 aa).

Belongs to the DNA 3' phosphatase family.

Its subcellular location is the nucleus. The enzyme catalyses a 3'end (2'-deoxyribonucleotide 3'-phosphate)-DNA + H2O = a 3'-end 2'-deoxyribonucleotide-DNA + phosphate. Dephosphorylate DNA's 3'-phosphate termini. Has a role in the repair of breaks in single-stranded DNA. The protein is Polynucleotide 3'-phosphatase (TPP1) of Saccharomyces cerevisiae (strain ATCC 204508 / S288c) (Baker's yeast).